A 308-amino-acid polypeptide reads, in one-letter code: Ribosomal RNA small subunit methyltransferase H (308 aa).

Residues 36–38 (GGH), Asp55, Phe82, Asp103, and Gln110 each bind S-adenosyl-L-methionine.

The protein belongs to the methyltransferase superfamily. RsmH family.

It is found in the cytoplasm. It carries out the reaction cytidine(1402) in 16S rRNA + S-adenosyl-L-methionine = N(4)-methylcytidine(1402) in 16S rRNA + S-adenosyl-L-homocysteine + H(+). Functionally, specifically methylates the N4 position of cytidine in position 1402 (C1402) of 16S rRNA. The polypeptide is Ribosomal RNA small subunit methyltransferase H (Helicobacter pylori (strain ATCC 700392 / 26695) (Campylobacter pylori)).